Consider the following 415-residue polypeptide: Homoserine O-succinyltransferase (415 aa).

Polar residues predominate over residues 1–26; that stretch reads MTSPALTAASVTPSRNTTSPDTTSHR. A disordered region spans residues 1 to 27; sequence MTSPALTAASVTPSRNTTSPDTTSHRP. The AB hydrolase-1 domain occupies 71 to 386; sequence NAVLICHALN…HGHDAFLLED (316 aa). Catalysis depends on Ser177, which acts as the Nucleophile. Arg247 lines the substrate pocket. Catalysis depends on residues Asp346 and His379. Position 380 (Asp380) interacts with substrate.

Belongs to the AB hydrolase superfamily. MetX family. As to quaternary structure, homodimer.

The protein localises to the cytoplasm. The catalysed reaction is L-homoserine + succinyl-CoA = O-succinyl-L-homoserine + CoA. Its pathway is amino-acid biosynthesis; L-methionine biosynthesis via de novo pathway; O-succinyl-L-homoserine from L-homoserine: step 1/1. Functionally, transfers a succinyl group from succinyl-CoA to L-homoserine, forming succinyl-L-homoserine. This Bordetella avium (strain 197N) protein is Homoserine O-succinyltransferase.